The chain runs to 210 residues: Guanylate kinase (210 aa).

The 181-residue stretch at 6–186 (GLLGIISAPS…ALIYLQSVIL (181 aa)) folds into the Guanylate kinase-like domain. An ATP-binding site is contributed by 13 to 20 (APSGAGKS).

It belongs to the guanylate kinase family.

The protein localises to the cytoplasm. The catalysed reaction is GMP + ATP = GDP + ADP. Its function is as follows. Essential for recycling GMP and indirectly, cGMP. The sequence is that of Guanylate kinase from Blochmanniella floridana.